Here is a 246-residue protein sequence, read N- to C-terminus: AA9 family lytic polysaccharide monooxygenase D (246 aa).

Positions 1–19 (MHLLSLLFPVIALIPTVLS) are cleaved as a signal peptide. His-20 contributes to the Cu(2+) binding site. Cysteines 78 and 196 form a disulfide. Residues Asn-86, Asn-141, and Asn-156 are each glycosylated (N-linked (GlcNAc...) asparagine). The O2 site is built by His-182 and Gln-191. Residue Tyr-193 coordinates Cu(2+). Asn-235 carries N-linked (GlcNAc...) asparagine glycosylation.

The protein belongs to the polysaccharide monooxygenase AA9 family. The cofactor is Cu(2+).

It localises to the secreted. The enzyme catalyses [(1-&gt;4)-beta-D-glucosyl]n+m + reduced acceptor + O2 = 4-dehydro-beta-D-glucosyl-[(1-&gt;4)-beta-D-glucosyl]n-1 + [(1-&gt;4)-beta-D-glucosyl]m + acceptor + H2O.. Lytic polysaccharide monooxygenase (LPMO) that depolymerizes crystalline and amorphous polysaccharides via the oxidation of scissile alpha- or beta-(1-4)-glycosidic bonds, yielding C1 and C4 oxidation products. Catalysis by LPMOs requires the reduction of the active-site copper from Cu(II) to Cu(I) by a reducing agent and H(2)O(2) or O(2) as a cosubstrate. The polypeptide is AA9 family lytic polysaccharide monooxygenase D (Botryotinia fuckeliana (strain B05.10) (Noble rot fungus)).